A 584-amino-acid chain; its full sequence is Mitochondrial sodium/calcium exchanger protein (584 aa).

An N-terminal signal peptide occupies residues 1 to 26; that stretch reads MAGRRLNLRWALSVLCVLLMAETVSG. Topologically, residues 27-95 are extracellular; sequence TRGSSTGAHI…GIFCHFPPSL (69 aa). N-linked (GlcNAc...) asparagine glycosylation occurs at N60. Residues 96–116 traverse the membrane as a helical segment; that stretch reads LPLAVTLYVSWLLYLFLILGV. The Cytoplasmic segment spans residues 117 to 140; it reads TAAKFFCPNLSAISTTLKLSHNVA. The helical transmembrane segment at 141–161 threads the bilayer; that stretch reads GVTFLAFGNGAPDIFSALVAF. At 162–168 the chain is on the extracellular side; it reads SDPHTAG. The helical transmembrane segment at 169-189 threads the bilayer; that stretch reads LALGALFGAGVLVTTVVAGGI. Over 190-200 the chain is Cytoplasmic; it reads TILHPFMAASR. A helical membrane pass occupies residues 201–221; the sequence is PFFRDIVFYMVAVFLTFLMLF. Residues 222–226 lie on the Extracellular side of the membrane; the sequence is RGRVT. A helical membrane pass occupies residues 227–247; sequence LAWALGYLGLYVFYVVTVILC. The Cytoplasmic segment spans residues 248 to 325; the sequence is TWIYQRQRRG…KWRRKSAYWK (78 aa). Residue S258 is modified to Phosphoserine; by PKA. A helical membrane pass occupies residues 326–346; the sequence is ALKVFKLPVEFLLLLTVPVVD. The Extracellular segment spans residues 347 to 360; the sequence is PDKDDQNWKRPLNC. The helical transmembrane segment at 361-381 threads the bilayer; the sequence is LHLVISPLVVVLTLQSGTYGV. Over 382-383 the chain is Cytoplasmic; sequence YE. The helical transmembrane segment at 384–404 threads the bilayer; it reads IGGLVPVWVVVVIAGTALASV. At 405–416 the chain is on the extracellular side; that stretch reads TFFATSDSQPPR. A helical membrane pass occupies residues 417–437; it reads LHWLFAFLGFLTSALWINAAA. The Cytoplasmic segment spans residues 438–445; the sequence is TEVVNILR. The helical transmembrane segment at 446-466 threads the bilayer; sequence SLGVVFRLSNTVLGLTLLAWG. Residues 467–487 lie on the Extracellular side of the membrane; it reads NSIGDAFSDFTLARQGYPRMA. The helical transmembrane segment at 488–508 threads the bilayer; it reads FSACFGGIIFNILVGVGLGCL. At 509–524 the chain is on the cytoplasmic side; sequence LQISRSHTEVKLEPDG. Residues 525 to 545 traverse the membrane as a helical segment; that stretch reads LLVWVLAGALGLSLVFSLVSV. Topologically, residues 546–558 are extracellular; the sequence is PLQCFQLSRVYGF. A helical transmembrane segment spans residues 559 to 579; that stretch reads CLLLFYLNFLVVALLTEFGVI. Residues 580 to 584 lie on the Cytoplasmic side of the membrane; that stretch reads HLKSM.

Belongs to the Ca(2+):cation antiporter (CaCA) (TC 2.A.19) family. SLC24A subfamily. Post-translationally, phosphorylation at Ser-258 by PKA prevents calcium overload. Present in pancreatic beta-cells (at protein level).

Its subcellular location is the mitochondrion inner membrane. The catalysed reaction is Ca(2+)(in) + 3 Na(+)(out) = Ca(2+)(out) + 3 Na(+)(in). It catalyses the reaction 3 Li(+)(out) + Ca(2+)(in) = 3 Li(+)(in) + Ca(2+)(out). With respect to regulation, inhibited by the sodium/calcium exchanger inhibitor CGP-37157. Strongly inhibited by zinc. Its function is as follows. Mitochondrial sodium/calcium antiporter that mediates sodium-dependent calcium efflux from mitochondrion, by mediating the exchange of 3 sodium ions per 1 calcium ion. Plays a central role in mitochondrial calcium homeostasis by mediating mitochondrial calcium extrusion: calcium efflux is essential for mitochondrial function and cell survival, notably in cardiomyocytes. Regulates rates of glucose-dependent insulin secretion in pancreatic beta-cells during the first phase of insulin secretion: acts by mediating efflux of calcium from mitochondrion, thereby affecting cytoplasmic calcium responses. Required for store-operated Ca(2+) entry (SOCE) and Ca(2+) release-activated Ca(2+) (CRAC) channel regulation: sodium transport by SLC8B1 leads to promote calcium-shuttling that modulates mitochondrial redox status, thereby regulating SOCE activity. Involved in B-lymphocyte chemotaxis. Able to transport Ca(2+) in exchange of either Li(+) or Na(+), explaining how Li(+) catalyzes Ca(2+) exchange. In contrast to other members of the family its function is independent of K(+). This is Mitochondrial sodium/calcium exchanger protein from Homo sapiens (Human).